A 25-amino-acid polypeptide reads, in one-letter code: Kunitz-type serine protease inhibitor 2 (25 aa).

The region spanning 6–25 (VCELPKEVGGPCRGHIIPRY) is the BPTI/Kunitz inhibitor domain.

The protein resides in the secreted. Inhibits bovine trypsin, human plasma kallikrein and human neutrophil elastase. This chain is Kunitz-type serine protease inhibitor 2, found in Rhipicephalus microplus (Cattle tick).